The primary structure comprises 269 residues: 4-hydroxy-tetrahydrodipicolinate reductase (269 aa).

NAD(+) contacts are provided by residues 8-13 and glutamate 34; that span reads GAAGRM. An NADP(+)-binding site is contributed by arginine 35. NAD(+) contacts are provided by residues 98 to 100 and 122 to 125; these read GTT and APNY. The active-site Proton donor/acceptor is histidine 155. Residue histidine 156 participates in (S)-2,3,4,5-tetrahydrodipicolinate binding. The active-site Proton donor is the lysine 159. 165-166 is a binding site for (S)-2,3,4,5-tetrahydrodipicolinate; that stretch reads GT.

This sequence belongs to the DapB family.

It is found in the cytoplasm. It catalyses the reaction (S)-2,3,4,5-tetrahydrodipicolinate + NAD(+) + H2O = (2S,4S)-4-hydroxy-2,3,4,5-tetrahydrodipicolinate + NADH + H(+). The catalysed reaction is (S)-2,3,4,5-tetrahydrodipicolinate + NADP(+) + H2O = (2S,4S)-4-hydroxy-2,3,4,5-tetrahydrodipicolinate + NADPH + H(+). Its pathway is amino-acid biosynthesis; L-lysine biosynthesis via DAP pathway; (S)-tetrahydrodipicolinate from L-aspartate: step 4/4. In terms of biological role, catalyzes the conversion of 4-hydroxy-tetrahydrodipicolinate (HTPA) to tetrahydrodipicolinate. The chain is 4-hydroxy-tetrahydrodipicolinate reductase from Vibrio campbellii (strain ATCC BAA-1116).